Here is a 225-residue protein sequence, read N- to C-terminus: NAD(P)H-quinone oxidoreductase subunit K, chloroplastic (225 aa).

4 residues coordinate [4Fe-4S] cluster: Cys-43, Cys-44, Cys-108, and Cys-139.

Belongs to the complex I 20 kDa subunit family. In terms of assembly, NDH is composed of at least 16 different subunits, 5 of which are encoded in the nucleus. Requires [4Fe-4S] cluster as cofactor.

The protein resides in the plastid. The protein localises to the chloroplast thylakoid membrane. The enzyme catalyses a plastoquinone + NADH + (n+1) H(+)(in) = a plastoquinol + NAD(+) + n H(+)(out). It carries out the reaction a plastoquinone + NADPH + (n+1) H(+)(in) = a plastoquinol + NADP(+) + n H(+)(out). NDH shuttles electrons from NAD(P)H:plastoquinone, via FMN and iron-sulfur (Fe-S) centers, to quinones in the photosynthetic chain and possibly in a chloroplast respiratory chain. The immediate electron acceptor for the enzyme in this species is believed to be plastoquinone. Couples the redox reaction to proton translocation, and thus conserves the redox energy in a proton gradient. In Nymphaea alba (White water-lily), this protein is NAD(P)H-quinone oxidoreductase subunit K, chloroplastic.